The sequence spans 252 residues: 3-deoxy-manno-octulosonate cytidylyltransferase (252 aa).

Belongs to the KdsB family.

The protein resides in the cytoplasm. It carries out the reaction 3-deoxy-alpha-D-manno-oct-2-ulosonate + CTP = CMP-3-deoxy-beta-D-manno-octulosonate + diphosphate. It participates in nucleotide-sugar biosynthesis; CMP-3-deoxy-D-manno-octulosonate biosynthesis; CMP-3-deoxy-D-manno-octulosonate from 3-deoxy-D-manno-octulosonate and CTP: step 1/1. Its pathway is bacterial outer membrane biogenesis; lipopolysaccharide biosynthesis. Activates KDO (a required 8-carbon sugar) for incorporation into bacterial lipopolysaccharide in Gram-negative bacteria. The sequence is that of 3-deoxy-manno-octulosonate cytidylyltransferase from Nitratidesulfovibrio vulgaris (strain DP4) (Desulfovibrio vulgaris).